A 118-amino-acid chain; its full sequence is Large ribosomal subunit protein uL18 (118 aa).

This sequence belongs to the universal ribosomal protein uL18 family. In terms of assembly, part of the 50S ribosomal subunit; part of the 5S rRNA/L5/L18/L25 subcomplex. Contacts the 5S and 23S rRNAs.

Functionally, this is one of the proteins that bind and probably mediate the attachment of the 5S RNA into the large ribosomal subunit, where it forms part of the central protuberance. This is Large ribosomal subunit protein uL18 from Rickettsia peacockii (strain Rustic).